The following is a 41-amino-acid chain: MDWRVLVVLLPVLLAAGWAVRNILPYAVKQVQKLLQKAKAA.

Methionine 1 carries the N-formylmethionine modification. At 1–4 (MDWR) the chain is on the lumenal side. A helical transmembrane segment spans residues 5–23 (VLVVLLPVLLAAGWAVRNI). The Cytoplasmic segment spans residues 24 to 41 (LPYAVKQVQKLLQKAKAA).

Belongs to the PsbY family. PSII is composed of 1 copy each of membrane proteins PsbA, PsbB, PsbC, PsbD, PsbE, PsbF, PsbH, PsbI, PsbJ, PsbK, PsbL, PsbM, PsbT, PsbX, PsbY, PsbZ, Psb30/Ycf12, peripheral proteins PsbO, CyanoQ (PsbQ), PsbU, PsbV and a large number of cofactors. It forms dimeric complexes. This protein is only loosely associated with PSII, and is not often found in crystals. Found on the exterior of the PSII dimer, near cytochrome b559 (psbE and psbF). PSII binds multiple chlorophylls, carotenoids and specific lipids. serves as cofactor.

The protein resides in the cellular thylakoid membrane. Loosely associated component of the core of photosystem II, it is not always seen in crystals. PSII is a light-driven water plastoquinone oxidoreductase, using light energy to abstract electrons from H(2)O, generating a proton gradient subsequently used for ATP formation. The polypeptide is Photosystem II reaction center protein Y (Thermosynechococcus vestitus (strain NIES-2133 / IAM M-273 / BP-1)).